The primary structure comprises 549 residues: Undecaprenyl phosphate-alpha-4-amino-4-deoxy-L-arabinose arabinosyl transferase (549 aa).

Transmembrane regions (helical) follow at residues 9-29 (LLLI…GLWI), 80-100 (LFGV…LAYL), 112-132 (SLAC…SGYA), 136-156 (PQFT…LDAG), 176-196 (FLTK…PYML), 204-224 (LLGY…PWAL), 256-276 (PWWF…GLLP), 288-308 (QPPV…FSLS), 312-332 (LPTY…HALV), 346-366 (NGLL…YLQL), 376-396 (FELF…LAQW), and 402-422 (AWAA…AAMP).

It belongs to the glycosyltransferase 83 family.

The protein localises to the cell inner membrane. The catalysed reaction is 4-amino-4-deoxy-alpha-L-arabinopyranosyl di-trans,octa-cis-undecaprenyl phosphate + lipid IVA = lipid IIA + di-trans,octa-cis-undecaprenyl phosphate.. It functions in the pathway lipopolysaccharide metabolism; 4-amino-4-deoxy-beta-L-arabinose-lipid A biosynthesis. Catalyzes the transfer of the L-Ara4N moiety of the glycolipid undecaprenyl phosphate-alpha-L-Ara4N to lipid A. The modified arabinose is attached to lipid A and is required for resistance to polymyxin and cationic antimicrobial peptides. This is Undecaprenyl phosphate-alpha-4-amino-4-deoxy-L-arabinose arabinosyl transferase from Pseudomonas paraeruginosa (strain DSM 24068 / PA7) (Pseudomonas aeruginosa (strain PA7)).